We begin with the raw amino-acid sequence, 601 residues long: ATP-dependent rRNA helicase SPB4 (601 aa).

The Q motif signature appears at 14–42 (LAWSQASLQPWIHDAIDSLGFRSMTPVQA). The region spanning 45 to 228 (IPLFCGNKDV…RTGMSNPVKI (184 aa)) is the Helicase ATP-binding domain. Position 58–65 (58–65 (AVTGSGKT)) interacts with ATP. Residues 176 to 179 (DEAD) carry the DEAD box motif. Residues 257–419 (VLINMLSTLQ…AYKAFSKNLR (163 aa)) enclose the Helicase C-terminal domain. Residues 507–575 (KEKIRLETME…QIMNESSDEE (69 aa)) adopt a coiled-coil conformation. Residues 532-554 (LKVKNEAWSSKNEKKEGKQERRE) show a composition bias toward basic and acidic residues. The tract at residues 532 to 576 (LKVKNEAWSSKNEKKEGKQERREKMKRKREAIEKQIMNESSDEET) is disordered.

It belongs to the DEAD box helicase family. DDX55/SPB4 subfamily. In terms of assembly, component of pre-60S ribosomal complexes.

The protein resides in the nucleus. The protein localises to the nucleolus. The enzyme catalyses ATP + H2O = ADP + phosphate + H(+). ATP-binding RNA helicase involved in the biogenesis of 60S ribosomal subunits. Binds 90S pre-ribosomal particles and dissociates from pre-60S ribosomal particles after processing of 27SB pre-rRNA. Required for the normal formation of 18S rRNA through the processing of pre-rRNAs at sites A0, A1 and A2, and the normal formation of 25S and 5.8S rRNAs through the processing of pre-rRNAs at sites C1 and C2. The polypeptide is ATP-dependent rRNA helicase SPB4 (Meyerozyma guilliermondii (strain ATCC 6260 / CBS 566 / DSM 6381 / JCM 1539 / NBRC 10279 / NRRL Y-324) (Yeast)).